The sequence spans 234 residues: 1-(5-phosphoribosyl)-5-[(5-phosphoribosylamino)methylideneamino] imidazole-4-carboxamide isomerase (234 aa).

Aspartate 9 acts as the Proton acceptor in catalysis. The active-site Proton donor is the aspartate 131.

Belongs to the HisA/HisF family.

The protein resides in the cytoplasm. The catalysed reaction is 1-(5-phospho-beta-D-ribosyl)-5-[(5-phospho-beta-D-ribosylamino)methylideneamino]imidazole-4-carboxamide = 5-[(5-phospho-1-deoxy-D-ribulos-1-ylimino)methylamino]-1-(5-phospho-beta-D-ribosyl)imidazole-4-carboxamide. The protein operates within amino-acid biosynthesis; L-histidine biosynthesis; L-histidine from 5-phospho-alpha-D-ribose 1-diphosphate: step 4/9. The chain is 1-(5-phosphoribosyl)-5-[(5-phosphoribosylamino)methylideneamino] imidazole-4-carboxamide isomerase from Staphylococcus saprophyticus subsp. saprophyticus (strain ATCC 15305 / DSM 20229 / NCIMB 8711 / NCTC 7292 / S-41).